Reading from the N-terminus, the 91-residue chain is Small ribosomal subunit protein uS19 (91 aa).

This sequence belongs to the universal ribosomal protein uS19 family.

In terms of biological role, protein S19 forms a complex with S13 that binds strongly to the 16S ribosomal RNA. The protein is Small ribosomal subunit protein uS19 of Syntrophotalea carbinolica (strain DSM 2380 / NBRC 103641 / GraBd1) (Pelobacter carbinolicus).